The following is a 453-amino-acid chain: Acyl-coenzyme A thioesterase 2, mitochondrial (453 aa).

The N-terminal 42 residues, 1-42, are a transit peptide targeting the mitochondrion; the sequence is MVASSFAVLRASRLCQWGWKSWTQLSGPPPLSTGGRTTFART. At Lys-83 the chain carries N6-acetyllysine. Active-site charge relay system residues include Ser-273, Asp-365, and His-399. Lys-447 is modified (N6-succinyllysine).

It belongs to the C/M/P thioester hydrolase family. As to quaternary structure, monomer. Post-translationally, the N-terminus is blocked. As to expression, constitutively expressed in heart and brown fat. Strongly induced in liver, and weakly in kidney, in peroxisome proliferator treated rat.

Its subcellular location is the mitochondrion matrix. The enzyme catalyses hexadecanoyl-CoA + H2O = hexadecanoate + CoA + H(+). The catalysed reaction is tetradecanoyl-CoA + H2O = tetradecanoate + CoA + H(+). It catalyses the reaction octadecanoyl-CoA + H2O = octadecanoate + CoA + H(+). It carries out the reaction eicosanoyl-CoA + H2O = eicosanoate + CoA + H(+). The enzyme catalyses decanoyl-CoA + H2O = decanoate + CoA + H(+). The catalysed reaction is dodecanoyl-CoA + H2O = dodecanoate + CoA + H(+). It catalyses the reaction (9Z)-octadecenoyl-CoA + H2O = (9Z)-octadecenoate + CoA + H(+). It carries out the reaction (9Z)-hexadecenoyl-CoA + H2O = (9Z)-hexadecenoate + CoA + H(+). The enzyme catalyses (9E)-octadecenoyl-CoA + H2O = (9E)-octadecenoate + CoA + H(+). The catalysed reaction is (9Z,12Z)-octadecadienoyl-CoA + H2O = (9Z,12Z)-octadecadienoate + CoA + H(+). It functions in the pathway lipid metabolism; fatty acid metabolism. In terms of biological role, catalyzes the hydrolysis of acyl-CoAs into free fatty acids and coenzyme A (CoASH), regulating their respective intracellular levels. Displays higher activity toward long chain acyl CoAs (C14-C20). The enzyme is involved in enhancing the hepatic fatty acid oxidation in mitochondria. The polypeptide is Acyl-coenzyme A thioesterase 2, mitochondrial (Acot2) (Rattus norvegicus (Rat)).